The following is a 127-amino-acid chain: Fluoride-specific ion channel FluC 1 (127 aa).

The next 3 membrane-spanning stretches (helical) occupy residues 6-26 (PLVT…GSNL), 29-49 (FVGL…CGSF), and 95-115 (EWAV…VLVG).

The protein belongs to the fluoride channel Fluc/FEX (TC 1.A.43) family.

It localises to the cell membrane. It carries out the reaction fluoride(in) = fluoride(out). Its function is as follows. Fluoride-specific ion channel. Important for reducing fluoride concentration in the cell, thus reducing its toxicity. This is Fluoride-specific ion channel FluC 1 from Haloarcula marismortui (strain ATCC 43049 / DSM 3752 / JCM 8966 / VKM B-1809) (Halobacterium marismortui).